The chain runs to 215 residues: Uracil-DNA glycosylase (215 aa).

Catalysis depends on aspartate 59, which acts as the Proton acceptor.

The protein belongs to the uracil-DNA glycosylase (UDG) superfamily. UNG family.

It localises to the cytoplasm. The enzyme catalyses Hydrolyzes single-stranded DNA or mismatched double-stranded DNA and polynucleotides, releasing free uracil.. Functionally, excises uracil residues from the DNA which can arise as a result of misincorporation of dUMP residues by DNA polymerase or due to deamination of cytosine. The polypeptide is Uracil-DNA glycosylase (Aliarcobacter butzleri (strain RM4018) (Arcobacter butzleri)).